The chain runs to 330 residues: Exostosin-like 2 (330 aa).

At 1 to 21 (MMRGCHICKLPGRVMGIRVLR) the chain is on the cytoplasmic side. A helical; Signal-anchor for type II membrane protein transmembrane segment spans residues 22-42 (FSLVVILVLLLVAGALTNLLP). At 43–330 (NIKEDKMLTL…FPYANHKSKM (288 aa)) the chain is on the lumenal side. Glutamine 72 contributes to the UDP-N-acetyl-alpha-D-galactosamine binding site. Glutamine 72 is a binding site for UDP-N-acetyl-alpha-D-glucosamine. Asparagine 75 is a glycosylation site (N-linked (GlcNAc...) asparagine). Residues arginine 76, asparagine 101, asparagine 130, arginine 135, aspartate 151, aspartate 152, aspartate 153, and aspartate 245 each coordinate UDP-N-acetyl-alpha-D-galactosamine. Residues arginine 76, asparagine 101, asparagine 130, arginine 135, aspartate 151, aspartate 152, aspartate 153, aspartate 245, aspartate 246, and arginine 293 each coordinate UDP-N-acetyl-alpha-D-glucosamine. A Mn(2+)-binding site is contributed by aspartate 153. A disulfide bridge connects residues cysteine 244 and cysteine 296. Residue aspartate 246 is part of the active site. Arginine 293 contributes to the UDP-N-acetyl-alpha-D-galactosamine binding site.

The protein belongs to the glycosyltransferase 47 family. The cofactor is Mn(2+).

It localises to the endoplasmic reticulum membrane. It carries out the reaction 3-O-(beta-D-GlcA-(1-&gt;3)-beta-D-Gal-(1-&gt;3)-beta-D-Gal-(1-&gt;4)-beta-D-Xyl)-L-seryl-[protein] + UDP-N-acetyl-alpha-D-glucosamine = 3-O-(alpha-D-GlcNAc-(1-&gt;4)-beta-D-GlcA-(1-&gt;3)-beta-D-Gal-(1-&gt;3)-beta-D-Gal-(1-&gt;4)-beta-D-Xyl)-L-seryl-[protein] + UDP + H(+). Functionally, glycosyltransferase required for the biosynthesis of heparan-sulfate and responsible for the alternating addition of beta-1-4-linked glucuronic acid (GlcA) and alpha-1-4-linked N-acetylglucosamine (GlcNAc) units to nascent heparan sulfate chains. This chain is Exostosin-like 2 (Extl2), found in Mus musculus (Mouse).